The sequence spans 291 residues: Phytanoyl-CoA dioxygenase domain-containing protein 1 (291 aa).

Phosphothreonine is present on Thr55. 2-oxoglutarate-binding positions include Lys102, Met141, 156 to 158, and Trp174; that span reads HQD. Positions 156 and 158 each coordinate Fe cation. A Fe cation-binding site is contributed by His246. 2-oxoglutarate is bound by residues Ser248 and Arg257.

Belongs to the PhyH family. PHYHD1 subfamily. Fe cation serves as cofactor.

Its function is as follows. 2-oxoglutarate(2OG)-dependent dioxygenase that catalyzes the conversion of 2-oxoglutarate to succinate and CO(2) in an iron-dependent manner. However, does not couple 2OG turnover to the hydroxylation of acyl-coenzyme A derivatives, implying that it is not directly involved in phytanoyl coenzyme-A metabolism. Does not show detectable activity towards fatty acid CoA thioesters. The protein is Phytanoyl-CoA dioxygenase domain-containing protein 1 (Phyhd1) of Rattus norvegicus (Rat).